The chain runs to 177 residues: Large ribosomal subunit protein uL6 (177 aa).

Belongs to the universal ribosomal protein uL6 family. As to quaternary structure, part of the 50S ribosomal subunit.

Functionally, this protein binds to the 23S rRNA, and is important in its secondary structure. It is located near the subunit interface in the base of the L7/L12 stalk, and near the tRNA binding site of the peptidyltransferase center. In Methylorubrum extorquens (strain CM4 / NCIMB 13688) (Methylobacterium extorquens), this protein is Large ribosomal subunit protein uL6.